The sequence spans 596 residues: Pentatricopeptide repeat-containing protein At5g38730 (596 aa).

PPR repeat units follow at residues 132–166, 167–201, 202–236, 237–271, 272–302, 306–340, 341–375, 376–410, 411–445, 446–480, 481–515, and 516–550; these read VSHV…GLKP, HLQA…GVVA, NIHV…GVFP, DIFT…GVAP, NIVT…IKDD, NHVT…GFSP, GVVT…KIEP, DNIT…GLKL, DMYS…GFSP, GYAT…GLCA, DVAL…GLVG, and DSVI…RLMV.

The protein belongs to the PPR family. P subfamily.

This is Pentatricopeptide repeat-containing protein At5g38730 from Arabidopsis thaliana (Mouse-ear cress).